A 2292-amino-acid chain; its full sequence is Protein Ycf2 (2292 aa).

1644-1651 (GSIGTGRS) contributes to the ATP binding site.

This sequence belongs to the Ycf2 family.

The protein resides in the plastid. It localises to the chloroplast stroma. Probable ATPase of unknown function. Its presence in a non-photosynthetic plant (Epifagus virginiana) and experiments in tobacco indicate that it has an essential function which is probably not related to photosynthesis. This Morus indica (Mulberry) protein is Protein Ycf2.